Consider the following 288-residue polypeptide: MTARRIDGKAIAQKIHADISLRSHAFLRQWGRSPGLAVVLVGADPASRIYVQKKRETCASVGIASFSANLPADTNPQQLLAHIGELNVNDAVDGILVQLPLPPHFDPEEIIEAIAVEKDVDGFHPYNIGRLALRAPLLRSCTPAGIMTLLQESGIDIKGKEAVIVGASNIVGRPMALELLLAGATVTVCHRFTRDLAAHVGRAELLVAAAGKPGLISGAWIREGAVVIDVGINRLPDGRVTGDVDFAGAEQRAAWITPVPGGVGPMTVATLLQNTLIAAEHRMGAPHV.

Residues 166 to 168 (GAS) and Ile-232 contribute to the NADP(+) site.

This sequence belongs to the tetrahydrofolate dehydrogenase/cyclohydrolase family. In terms of assembly, homodimer.

It catalyses the reaction (6R)-5,10-methylene-5,6,7,8-tetrahydrofolate + NADP(+) = (6R)-5,10-methenyltetrahydrofolate + NADPH. The enzyme catalyses (6R)-5,10-methenyltetrahydrofolate + H2O = (6R)-10-formyltetrahydrofolate + H(+). The protein operates within one-carbon metabolism; tetrahydrofolate interconversion. In terms of biological role, catalyzes the oxidation of 5,10-methylenetetrahydrofolate to 5,10-methenyltetrahydrofolate and then the hydrolysis of 5,10-methenyltetrahydrofolate to 10-formyltetrahydrofolate. The polypeptide is Bifunctional protein FolD (Acidithiobacillus ferrooxidans (strain ATCC 23270 / DSM 14882 / CIP 104768 / NCIMB 8455) (Ferrobacillus ferrooxidans (strain ATCC 23270))).